We begin with the raw amino-acid sequence, 231 residues long: Large ribosomal subunit protein uL1 (231 aa).

Belongs to the universal ribosomal protein uL1 family. In terms of assembly, part of the 50S ribosomal subunit.

Binds directly to 23S rRNA. The L1 stalk is quite mobile in the ribosome, and is involved in E site tRNA release. Its function is as follows. Protein L1 is also a translational repressor protein, it controls the translation of the L11 operon by binding to its mRNA. The polypeptide is Large ribosomal subunit protein uL1 (Acinetobacter baumannii (strain AB0057)).